A 147-amino-acid chain; its full sequence is Small ribosomal subunit protein uS13 (147 aa).

Residues 115–147 (SYKGRRHEAGLPVRGQRTKSTFRNSSSVGVKRS) are disordered. A compositionally biased stretch (polar residues) spans 132–147 (TKSTFRNSSSVGVKRS).

Belongs to the universal ribosomal protein uS13 family. Part of the 30S ribosomal subunit. Forms a loose heterodimer with protein S19. Forms two bridges to the 50S subunit in the 70S ribosome.

In terms of biological role, located at the top of the head of the 30S subunit, it contacts several helices of the 16S rRNA. In the 70S ribosome it contacts the 23S rRNA (bridge B1a) and protein L5 of the 50S subunit (bridge B1b), connecting the 2 subunits; these bridges are implicated in subunit movement. The sequence is that of Small ribosomal subunit protein uS13 from Methanobrevibacter smithii (strain ATCC 35061 / DSM 861 / OCM 144 / PS).